The primary structure comprises 111 residues: WAP four-disulfide core domain protein 12 (111 aa).

The first 23 residues, 1-23 (MGSSSFLVLMVSLTLVTLVAVEG), serve as a signal peptide directing secretion. The WAP domain maps to 27-74 (DIEKAGVCPADNVRCFKSDPPQCHTDQDCLGERKCCYLHCGFKCVIPV). 4 disulfides stabilise this stretch: C34-C62, C41-C66, C49-C61, and C55-C70. The tract at residues 80–111 (GGNKDEDVSRPYPEPGWEAKCPGSSSTRCPQK) is disordered. Residues 102–111 (GSSSTRCPQK) are compositionally biased toward polar residues.

The protein resides in the secreted. Its function is as follows. Antibacterial protein. Putative acid-stable proteinase inhibitor. This Pan troglodytes (Chimpanzee) protein is WAP four-disulfide core domain protein 12 (WFDC12).